Consider the following 319-residue polypeptide: ATP-dependent 6-phosphofructokinase (319 aa).

Residue Gly11 participates in ATP binding. ADP is bound at residue 21-25; it reads RAVVR. Residues 72 to 73 and 102 to 105 contribute to the ATP site; these read RC and GDGS. Residue Asp103 coordinates Mg(2+). 125-127 lines the substrate pocket; it reads TID. Residue Asp127 is the Proton acceptor of the active site. Arg154 contributes to the ADP binding site. Substrate-binding positions include Arg162 and 169–171; that span reads MGR. Residues 185-187, Arg211, and 213-215 contribute to the ADP site; these read GAE and KKH. Substrate contacts are provided by residues Glu222, Arg243, and 249–252; that span reads HVQR.

It belongs to the phosphofructokinase type A (PFKA) family. ATP-dependent PFK group I subfamily. Prokaryotic clade 'B1' sub-subfamily. Homotetramer. Mg(2+) is required as a cofactor.

It is found in the cytoplasm. The catalysed reaction is beta-D-fructose 6-phosphate + ATP = beta-D-fructose 1,6-bisphosphate + ADP + H(+). Its pathway is carbohydrate degradation; glycolysis; D-glyceraldehyde 3-phosphate and glycerone phosphate from D-glucose: step 3/4. With respect to regulation, allosterically activated by ADP and other diphosphonucleosides, and allosterically inhibited by phosphoenolpyruvate. Catalyzes the phosphorylation of D-fructose 6-phosphate to fructose 1,6-bisphosphate by ATP, the first committing step of glycolysis. This Bacillus cereus (strain B4264) protein is ATP-dependent 6-phosphofructokinase.